Consider the following 356-residue polypeptide: Sporulation minus regulator 1 (356 aa).

A DNA-binding region spans residues 183-199; that stretch reads HPLRQLPGNPWHKFFGN.

The protein to N.crassa mta-2.

It localises to the nucleus. Its function is as follows. Transcriptional activator that is required for post-fertilization events. It is required for the developmental events that occur in the female organ after fertilization. The protein is Sporulation minus regulator 1 (SMR1) of Podospora anserina (Pleurage anserina).